The primary structure comprises 393 residues: Na(+)/H(+) antiporter NhaA (393 aa).

A run of 12 helical transmembrane segments spans residues alanine 23–phenylalanine 43, leucine 58–leucine 78, methionine 96–leucine 116, glycine 126–glycine 146, valine 155–phenylalanine 175, alanine 178–methionine 198, methionine 201–phenylalanine 221, glycine 224–proline 244, valine 265–leucine 285, isoleucine 298–isoleucine 318, leucine 334–leucine 354, and isoleucine 367–alanine 387.

Belongs to the NhaA Na(+)/H(+) (TC 2.A.33) antiporter family.

Its subcellular location is the cell inner membrane. It carries out the reaction Na(+)(in) + 2 H(+)(out) = Na(+)(out) + 2 H(+)(in). Its function is as follows. Na(+)/H(+) antiporter that extrudes sodium in exchange for external protons. The polypeptide is Na(+)/H(+) antiporter NhaA (Brucella suis (strain ATCC 23445 / NCTC 10510)).